A 433-amino-acid chain; its full sequence is MINWLHLPDEIWLLIGNFISDREICCLAFVNTRFLNLLSYNKINQNLVLECAIEVDNIYIINKLIDKTDVNGLKFVMRWSALHGSFQIIKSIIRKDHNNDLLDLHAINWSIESNHLHISKYLIDKYNIVIIPESAFIYGRLDIIDWMFSRQNQNNANKKSTIKKTVDFLKSKFISHDYFYDSMIELACLYGHVHVVQYFIDNQCSVRQKWLYYSCLSGNFDLVKLLCKNGCRIFSNRRLINTAITGGNLDIVRYCLLHSKIDLAQNNFAMKIAIKTGHIGIVRLLVSHGSDIHFDNGECMIIASRGGFANIVKFFLENKVYMSEKVLKIAAIRGYLDIIKVFIKYASACMSNINSVCKSNGSMVVDNHINYIVNITRNFNMRKILIWSLINNRINIVTYLLEIFPKLREILNQIMYQHPEISEKIDLDSLYKN.

10 ANK repeats span residues 44–70 (NQNL…KTDV), 71–101 (NGLK…NNDL), 102–131 (LDLH…IVII), 179–205 (FYDS…NQCS), 206–235 (VRQK…RIFS), 237–264 (RRLI…IDLA), 265–294 (QNNF…DIHF), 296–321 (NGEC…NKVY), 322–351 (MSEK…ACMS), and 380–409 (NMRK…KLRE).

The chain is Putative ankyrin repeat protein R784 from Acanthamoeba polyphaga mimivirus (APMV).